Reading from the N-terminus, the 103-residue chain is Seminal ribonuclease (103 aa).

4 disulfide bridges follow: C12/C70, C26/C81, C44/C96, and C51/C58. Substrate is bound by residues 27 to 31 (KLVNT), K52, and R71.

Belongs to the pancreatic ribonuclease family. Homodimer; disulfide-linked.

The protein localises to the secreted. It catalyses the reaction an [RNA] containing cytidine + H2O = an [RNA]-3'-cytidine-3'-phosphate + a 5'-hydroxy-ribonucleotide-3'-[RNA].. The catalysed reaction is an [RNA] containing uridine + H2O = an [RNA]-3'-uridine-3'-phosphate + a 5'-hydroxy-ribonucleotide-3'-[RNA].. This enzyme hydrolyzes both single- and double-stranded RNA. The sequence is that of Seminal ribonuclease (SRN) from Cephalophus silvicultor (Yellow-backed duiker).